The following is a 349-amino-acid chain: DNA-directed RNA polymerase subunit alpha (349 aa).

The tract at residues 1 to 226 (MLIAQRPTLV…GLFGLAQELN (226 aa)) is alpha N-terminal domain (alpha-NTD). Positions 241-349 (AALAADLALP…GAEFVETEQY (109 aa)) are alpha C-terminal domain (alpha-CTD). Residues 308 to 349 (LKDSPPGFDPRQAVDTYGTDSYNPAFSDPSDDGAEFVETEQY) form a disordered region. Residues 336-349 (PSDDGAEFVETEQY) show a composition bias toward acidic residues.

Belongs to the RNA polymerase alpha chain family. Homodimer. The RNAP catalytic core consists of 2 alpha, 1 beta, 1 beta' and 1 omega subunit. When a sigma factor is associated with the core the holoenzyme is formed, which can initiate transcription.

It catalyses the reaction RNA(n) + a ribonucleoside 5'-triphosphate = RNA(n+1) + diphosphate. DNA-dependent RNA polymerase catalyzes the transcription of DNA into RNA using the four ribonucleoside triphosphates as substrates. In Frankia alni (strain DSM 45986 / CECT 9034 / ACN14a), this protein is DNA-directed RNA polymerase subunit alpha.